A 622-amino-acid polypeptide reads, in one-letter code: Probable potassium transport system protein Kup (622 aa).

Helical transmembrane passes span 8-28 (LAAL…TSVL), 50-70 (VLSI…VVLV), 103-123 (LGIG…TPAI), 137-157 (PHFG…LFAV), 169-189 (FGPV…PHIV), 215-235 (FIIL…YADL), 247-267 (WFSV…ALLL), 285-305 (ALIP…QALI), 337-357 (IYIP…VVMF), 366-386 (AYGI…FFVI), 393-413 (PLAL…AFFG), and 419-439 (LLQG…LMMT).

It belongs to the HAK/KUP transporter (TC 2.A.72) family.

It localises to the cell inner membrane. The enzyme catalyses K(+)(in) + H(+)(in) = K(+)(out) + H(+)(out). In terms of biological role, transport of potassium into the cell. Likely operates as a K(+):H(+) symporter. This Paracidovorax citrulli (strain AAC00-1) (Acidovorax citrulli) protein is Probable potassium transport system protein Kup.